A 311-amino-acid chain; its full sequence is 4-hydroxy-tetrahydrodipicolinate synthase (311 aa).

A pyruvate-binding site is contributed by T49. Y138 serves as the catalytic Proton donor/acceptor. Residue K166 is the Schiff-base intermediate with substrate of the active site. I207 serves as a coordination point for pyruvate.

Belongs to the DapA family. In terms of assembly, homotetramer; dimer of dimers.

The protein resides in the cytoplasm. The catalysed reaction is L-aspartate 4-semialdehyde + pyruvate = (2S,4S)-4-hydroxy-2,3,4,5-tetrahydrodipicolinate + H2O + H(+). It functions in the pathway amino-acid biosynthesis; L-lysine biosynthesis via DAP pathway; (S)-tetrahydrodipicolinate from L-aspartate: step 3/4. Catalyzes the condensation of (S)-aspartate-beta-semialdehyde [(S)-ASA] and pyruvate to 4-hydroxy-tetrahydrodipicolinate (HTPA). The polypeptide is 4-hydroxy-tetrahydrodipicolinate synthase (Limosilactobacillus fermentum (strain NBRC 3956 / LMG 18251) (Lactobacillus fermentum)).